Reading from the N-terminus, the 272-residue chain is Insulin-like growth factor-binding protein 1 (272 aa).

Positions 1 to 25 are cleaved as a signal peptide; it reads MPEVPAAGLWPFLLLLAVQVSTVAS. Residues 28–109 enclose the IGFBP N-terminal domain; that stretch reads QPWHCAPCSA…TRGQGACVPE (82 aa). Cystine bridges form between cysteine 32–cysteine 59, cysteine 35–cysteine 61, cysteine 43–cysteine 62, cysteine 50–cysteine 65, and cysteine 73–cysteine 86. Phosphoserine is present on residues serine 139, serine 157, and serine 169. At threonine 170 the chain carries Phosphothreonine. Tyrosine 171 bears the Phosphotyrosine mark. Residues 186–264 form the Thyroglobulin type-1 domain; it reads KQPCRRELYK…SLEIRGDPNC (79 aa). Intrachain disulfides connect cysteine 189/cysteine 219, cysteine 230/cysteine 241, and cysteine 243/cysteine 264. A Phosphoserine modification is found at serine 255. Residues 259-261 carry the Cell attachment site motif; sequence RGD.

As to quaternary structure, binds equally well IGF1 and IGF2. Interacts with integrin ITGA5:ITGB1. Interacts with VHL; this interaction inhibits HIF1A degradation.

It localises to the secreted. Functionally, multifunctional protein that plays a critical role in regulating the availability of IGFs such as IGF1 and IGF2 to their receptors and thereby regulates IGF-mediated cellular processes including cell migration, proliferation, differentiation or apoptosis in a cell-type specific manner. Also plays a positive role in cell migration by interacting with integrin ITGA5:ITGB1 through its RGD motif. Mechanistically, binding to integrins leads to activation of focal adhesion kinase/PTK2 and stimulation of the mitogen-activated protein kinase (MAPK) pathway. Regulates cardiomyocyte apoptosis by suppressing HIF-1alpha/HIF1A degradation through ubiquitination. This is Insulin-like growth factor-binding protein 1 (IGFBP1) from Ictidomys tridecemlineatus (Thirteen-lined ground squirrel).